The sequence spans 414 residues: Glutamyl-tRNA reductase (414 aa).

Residues 49-52, serine 108, 113-115, and glutamine 119 contribute to the substrate site; these read TCNR and EPQ. Cysteine 50 (nucleophile) is an active-site residue. 188-193 is a binding site for NADP(+); the sequence is GAGQTG.

Belongs to the glutamyl-tRNA reductase family. As to quaternary structure, homodimer.

It catalyses the reaction (S)-4-amino-5-oxopentanoate + tRNA(Glu) + NADP(+) = L-glutamyl-tRNA(Glu) + NADPH + H(+). It participates in porphyrin-containing compound metabolism; protoporphyrin-IX biosynthesis; 5-aminolevulinate from L-glutamyl-tRNA(Glu): step 1/2. Catalyzes the NADPH-dependent reduction of glutamyl-tRNA(Glu) to glutamate 1-semialdehyde (GSA). The sequence is that of Glutamyl-tRNA reductase from Francisella tularensis subsp. tularensis (strain WY96-3418).